A 66-amino-acid polypeptide reads, in one-letter code: Large ribosomal subunit protein eL24 (66 aa).

Zn(2+) is bound by residues Cys-7, Cys-10, Cys-33, and Cys-37. Residues 7-37 (CSYCGKPFEPGTGKMYVRNDGRVLFFCSRKC) form a C4-type zinc finger.

The protein belongs to the eukaryotic ribosomal protein eL24 family. Part of the 50S ribosomal subunit. Forms a cluster with proteins L3 and L14. Zn(2+) is required as a cofactor.

Functionally, binds to the 23S rRNA. The chain is Large ribosomal subunit protein eL24 from Pyrococcus furiosus (strain ATCC 43587 / DSM 3638 / JCM 8422 / Vc1).